A 552-amino-acid chain; its full sequence is Solute carrier family 22 member 6-B (552 aa).

Residues M1–Y16 lie on the Cytoplasmic side of the membrane. Residues Q17–M37 form a helical membrane-spanning segment. At Q38 to Q137 the chain is on the extracellular side. Residues V138–S158 form a helical membrane-spanning segment. At D159 to R164 the chain is on the cytoplasmic side. The helical transmembrane segment at P165–S184 threads the bilayer. Position 185 (P185) is a topological domain, extracellular. Residues N186 to L206 traverse the membrane as a helical segment. Residues N207–S225 lie on the Cytoplasmic side of the membrane. Residues T226–I246 traverse the membrane as a helical segment. At R247–Q250 the chain is on the extracellular side. The chain crosses the membrane as a helical span at residues W251–P271. At E272–P336 the chain is on the cytoplasmic side. The helical transmembrane segment at V337–Y356 threads the bilayer. Residue Y357 is a topological domain, extracellular. A helical transmembrane segment spans residues G358–G378. Residues T379–R398 are Cytoplasmic-facing. Residues V399–P419 traverse the membrane as a helical segment. Residues Q420–R426 are Extracellular-facing. The chain crosses the membrane as a helical span at residues T427–Y447. The Cytoplasmic segment spans residues T448–T459. A helical membrane pass occupies residues G460–M480. Residues T481 to S487 are Extracellular-facing. The chain crosses the membrane as a helical span at residues L488–P508. Residues E509 to V552 lie on the Cytoplasmic side of the membrane.

This sequence belongs to the major facilitator (TC 2.A.1) superfamily. Organic cation transporter (TC 2.A.1.19) family. Glycosylated. Glycosylation is necessary for proper targeting of the transporter to the plasma membrane.

The protein resides in the cell membrane. It is found in the basolateral cell membrane. It localises to the basal cell membrane. Involved in the renal elimination of endogenous and exogenous organic anions. Mediates the sodium-independent uptake of p-aminohippurate (PAH), cidofovir, adefovir, 9-(2-phosphonylmethoxyethyl) guanine (PMEG), 9-(2-phosphonylmethoxyethyl) diaminopurine (PMEDAP) and edaravone sulfate. PAH uptake is inhibited by furosemide, steviol, phorbol 12-myristate 13-acetate (PMA), calcium ionophore A23187, benzylpenicillin, furosemide, indomethacin, bumetamide, losartan, probenecid, phenol red, urate, and alpha-ketoglutarate. The sequence is that of Solute carrier family 22 member 6-B (slc22a6-b) from Xenopus laevis (African clawed frog).